We begin with the raw amino-acid sequence, 354 residues long: Probable L-ascorbate-6-phosphate lactonase UlaG (354 aa).

It belongs to the UlaG family. The cofactor is a divalent metal cation.

The protein resides in the cytoplasm. The catalysed reaction is L-ascorbate 6-phosphate + H2O = 3-dehydro-L-gulonate 6-phosphate. It functions in the pathway cofactor degradation; L-ascorbate degradation; D-xylulose 5-phosphate from L-ascorbate: step 1/4. In terms of biological role, probably catalyzes the hydrolysis of L-ascorbate-6-P into 3-keto-L-gulonate-6-P. Is essential for L-ascorbate utilization under anaerobic conditions. This is Probable L-ascorbate-6-phosphate lactonase UlaG from Salmonella gallinarum (strain 287/91 / NCTC 13346).